The following is a 627-amino-acid chain: UvrABC system protein C (627 aa).

A GIY-YIG domain is found at 26–105 (PSPGVYQFRN…IKELKPRYNV (80 aa)). A UVR domain is found at 219-254 (STMIRSLTSAMQLFARELKFERAAEIKMQLESLKRY).

It belongs to the UvrC family. Interacts with UvrB in an incision complex.

Its subcellular location is the cytoplasm. The UvrABC repair system catalyzes the recognition and processing of DNA lesions. UvrC both incises the 5' and 3' sides of the lesion. The N-terminal half is responsible for the 3' incision and the C-terminal half is responsible for the 5' incision. This chain is UvrABC system protein C, found in Pelodictyon phaeoclathratiforme (strain DSM 5477 / BU-1).